The following is a 217-amino-acid chain: Vesicle transport through interaction with t-SNAREs homolog 1A (217 aa).

Residues 1–192 (MSSDFEGYEQ…GMLRRIIQNR (192 aa)) lie on the Cytoplasmic side of the membrane. 2 coiled-coil regions span residues 31-92 (PDEK…KRSR) and 112-178 (ENQR…GKSS). Residues 193-213 (ILLVILGIIVVIAILTAIAFF) traverse the membrane as a helical; Anchor for type IV membrane protein segment. Residues 214 to 217 (VKGH) are Vesicular-facing.

Belongs to the VTI1 family. As to quaternary structure, interacts with distinct SNARE complexes that contain either STX5 or STX6. Interacts with NAPA and, to a lesser extent, with NAPG. Identified in a complex containing STX6, STX12, VAMP4 and VTI1A. Widely expressed.

It localises to the golgi apparatus membrane. Its function is as follows. V-SNARE that mediates vesicle transport pathways through interactions with t-SNAREs on the target membrane. These interactions are proposed to mediate aspects of the specificity of vesicle trafficking and to promote fusion of the lipid bilayers. Involved in vesicular transport from the late endosomes to the trans-Golgi network. Along with VAMP7, involved in an non-conventional RAB1-dependent traffic route to the cell surface used by KCNIP1 and KCND2. May be concerned with increased secretion of cytokines associated with cellular senescence. This Mus musculus (Mouse) protein is Vesicle transport through interaction with t-SNAREs homolog 1A (Vti1a).